Reading from the N-terminus, the 382-residue chain is MTEYLFTSESVSEGHPDKIADQISDAVLDAILEKDLKARVACETLVKTGMVVIAGEIGTSTWVDLEDLVRKTICTIGYTHSEMGFDGRTCAVLNAIGKQSGDIAQGVDRGEAKLQGAGDQGLMFGYACTETPTLMPAPITYAHRLVEKQAQLRHSGALPWLRPDAKSQITFRYRDNTIVGVDAIVLSTQHSEEISLKELTEAVREEIIAPIVPSKWIDKKTRFHINPTGKFVIGGPLGDCGLTGRKIIVDTYGGAARHGGGAFSGKDPSKVDRSAAYAARYVAKNVVAAGLATRCEVQLSYAIGIAEPTSIMVNTFGTGTIDDAEIVRRVQAVFDLTPYGIIEMLDLVRPIYQKTAVYGHFGRELPQFTWEKTDRSDALQQA.

An ATP-binding site is contributed by H15. D17 contributes to the Mg(2+) binding site. A K(+)-binding site is contributed by E43. The L-methionine site is built by E56 and Q99. Residues 99–109 (QSGDIAQGVDR) are flexible loop. ATP is bound by residues 164–166 (DAK), 230–231 (KF), D239, 245–246 (RK), A262, and K266. An L-methionine-binding site is contributed by D239. K270 provides a ligand contact to L-methionine.

This sequence belongs to the AdoMet synthase family. As to quaternary structure, homotetramer; dimer of dimers. It depends on Mg(2+) as a cofactor. K(+) serves as cofactor.

The protein resides in the cytoplasm. It catalyses the reaction L-methionine + ATP + H2O = S-adenosyl-L-methionine + phosphate + diphosphate. It functions in the pathway amino-acid biosynthesis; S-adenosyl-L-methionine biosynthesis; S-adenosyl-L-methionine from L-methionine: step 1/1. Its function is as follows. Catalyzes the formation of S-adenosylmethionine (AdoMet) from methionine and ATP. The overall synthetic reaction is composed of two sequential steps, AdoMet formation and the subsequent tripolyphosphate hydrolysis which occurs prior to release of AdoMet from the enzyme. The protein is S-adenosylmethionine synthase of Dichelobacter nodosus (strain VCS1703A).